The chain runs to 367 residues: GTP cyclohydrolase FolE2 (367 aa).

This sequence belongs to the GTP cyclohydrolase IV family.

It carries out the reaction GTP + H2O = 7,8-dihydroneopterin 3'-triphosphate + formate + H(+). It participates in cofactor biosynthesis; 7,8-dihydroneopterin triphosphate biosynthesis; 7,8-dihydroneopterin triphosphate from GTP: step 1/1. Functionally, converts GTP to 7,8-dihydroneopterin triphosphate. The polypeptide is GTP cyclohydrolase FolE2 (Ruegeria pomeroyi (strain ATCC 700808 / DSM 15171 / DSS-3) (Silicibacter pomeroyi)).